The sequence spans 561 residues: Arginine--tRNA ligase (561 aa).

Positions 128–138 (ANPTGPLHVGH) match the 'HIGH' region motif.

The protein belongs to the class-I aminoacyl-tRNA synthetase family. As to quaternary structure, monomer.

The protein resides in the cytoplasm. The enzyme catalyses tRNA(Arg) + L-arginine + ATP = L-arginyl-tRNA(Arg) + AMP + diphosphate. The polypeptide is Arginine--tRNA ligase (Chromohalobacter salexigens (strain ATCC BAA-138 / DSM 3043 / CIP 106854 / NCIMB 13768 / 1H11)).